The sequence spans 160 residues: Adenosine 5'-monophosphoramidase HINT3 (160 aa).

The region spanning 24–132 is the HIT domain; sequence IFCTIAKGDD…LAPYSQLYKW (109 aa). AMP contacts are provided by residues 50 to 51 and 119 to 121; these read DI and HLH. The short motif at 117 to 121 is the Histidine triad motif element; that stretch reads HLHLH. His-119 functions as the Tele-AMP-histidine intermediate in the catalytic mechanism.

Belongs to the HINT family. In terms of assembly, forms dimers to octamers and even larger oligomer.

It is found in the cytoplasm. The protein resides in the nucleus. The enzyme catalyses adenosine 5'-phosphoramidate + H2O = AMP + NH4(+). In terms of biological role, exhibits adenosine 5'-monophosphoramidase activity, hydrolyzing purine nucleotide phosphoramidates with a single phosphate group such as adenosine 5'monophosphoramidate (AMP-NH2) to yield AMP and NH2. Hydrolyzes lysyl-AMP (AMP-N-epsilon-(N-alpha-acetyl lysine methyl ester)) generated by lysine tRNA ligase. The sequence is that of Adenosine 5'-monophosphoramidase HINT3 (hint3) from Danio rerio (Zebrafish).